Reading from the N-terminus, the 71-residue chain is Non-structural protein 3x (71 aa).

This chain is Non-structural protein 3x, found in Feline coronavirus (strain FIPV WSU-79/1146) (FCoV).